We begin with the raw amino-acid sequence, 1386 residues long: DNA-directed RNA polymerase subunit beta (1386 aa).

It belongs to the RNA polymerase beta chain family. In terms of assembly, the RNAP catalytic core consists of 2 alpha, 1 beta, 1 beta' and 1 omega subunit. When a sigma factor is associated with the core the holoenzyme is formed, which can initiate transcription.

The catalysed reaction is RNA(n) + a ribonucleoside 5'-triphosphate = RNA(n+1) + diphosphate. In terms of biological role, DNA-dependent RNA polymerase catalyzes the transcription of DNA into RNA using the four ribonucleoside triphosphates as substrates. The protein is DNA-directed RNA polymerase subunit beta of Nitratiruptor sp. (strain SB155-2).